Reading from the N-terminus, the 89-residue chain is Small ribosomal subunit protein uS15 (89 aa).

The segment covering 1-21 has biased composition (basic and acidic residues); the sequence is MVLDPTQKKSVIDAHAKHEGD. The segment at 1 to 24 is disordered; sequence MVLDPTQKKSVIDAHAKHEGDTGS.

It belongs to the universal ribosomal protein uS15 family. In terms of assembly, part of the 30S ribosomal subunit. Forms a bridge to the 50S subunit in the 70S ribosome, contacting the 23S rRNA.

One of the primary rRNA binding proteins, it binds directly to 16S rRNA where it helps nucleate assembly of the platform of the 30S subunit by binding and bridging several RNA helices of the 16S rRNA. Functionally, forms an intersubunit bridge (bridge B4) with the 23S rRNA of the 50S subunit in the ribosome. The sequence is that of Small ribosomal subunit protein uS15 from Desulfovibrio desulfuricans (strain ATCC 27774 / DSM 6949 / MB).